A 200-amino-acid polypeptide reads, in one-letter code: 3-isopropylmalate dehydratase small subunit (200 aa).

The protein belongs to the LeuD family. LeuD type 1 subfamily. In terms of assembly, heterodimer of LeuC and LeuD.

The enzyme catalyses (2R,3S)-3-isopropylmalate = (2S)-2-isopropylmalate. It participates in amino-acid biosynthesis; L-leucine biosynthesis; L-leucine from 3-methyl-2-oxobutanoate: step 2/4. Catalyzes the isomerization between 2-isopropylmalate and 3-isopropylmalate, via the formation of 2-isopropylmaleate. This Actinobacillus succinogenes (strain ATCC 55618 / DSM 22257 / CCUG 43843 / 130Z) protein is 3-isopropylmalate dehydratase small subunit.